The primary structure comprises 1520 residues: DNA topoisomerase 2 top-2 (1520 aa).

Residues 1–10 (MSDSDSEFSI) are compositionally biased toward acidic residues. The segment at 1–40 (MSDSDSEFSIEDSPKKKTAPKKEKASPKKKKDDANESMVM) is disordered. The segment covering 12–34 (DSPKKKTAPKKEKASPKKKKDDA) has biased composition (basic and acidic residues). ATP is bound by residues Asn126, Asn155, 183–185 (SSN), 196–203 (GRNGYGAK), and 411–413 (QTK). Positions 490-607 (CTLILTEGDS…SLIQRNFVEE (118 aa)) constitute a Toprim domain. Mg(2+) contacts are provided by Glu496, Asp576, and Asp578. The region spanning 750–1219 (IPCLVDGFKP…TWQDLWHEDL (470 aa)) is the Topo IIA-type catalytic domain. The active-site O-(5'-phospho-DNA)-tyrosine intermediate is the Tyr840. Residues 1249–1520 (AADAKTGRGP…RGRVVDSDSD (272 aa)) are disordered. The segment covering 1283–1320 (TKAKYEKMSQPKKERVKKEPKEPKEPKKVKKEGQDIKK) has biased composition (basic and acidic residues). Residues 1342 to 1364 (MSEESDVEFDEGIDFDSDDDGVE) are compositionally biased toward acidic residues.

It belongs to the type II topoisomerase family. Homodimer. Interacts with nmad-1; the interaction is required for localization of top-2 to DNA. Interacts with gcna-1; this interaction allows the resolution of topoisomerase 2 DNA-protein cross-links. Mg(2+) is required as a cofactor. It depends on Mn(2+) as a cofactor. The cofactor is Ca(2+). In terms of tissue distribution, expressed in the hermaphrodite and male germline.

It localises to the nucleus. The protein localises to the nucleoplasm. Its subcellular location is the chromosome. It is found in the cytoplasm. The protein resides in the cytoskeleton. It localises to the spindle. It carries out the reaction ATP-dependent breakage, passage and rejoining of double-stranded DNA.. In terms of biological role, control of topological states of DNA by transient breakage and subsequent rejoining of DNA strands. Topoisomerase II makes double-strand breaks. Essential during mitosis in the adult germline and during embryogenesis for proper segregation of daughter chromosomes. Required for centromere resolution during mitosis. Required for chromosome segregation in anaphase of meiosis I during spermatogenesis. Promotes cleavage furrow stability during cytokinesis upon the presence of chromatin obstructions. Promotes DNA break formation upon zygotic genome activation in the Z2 and Z3 primordial germ cells in L1 larvae, thereby activating a checkpoint response. Essential for embryogenesis. The chain is DNA topoisomerase 2 top-2 from Caenorhabditis elegans.